A 305-amino-acid chain; its full sequence is N-acetylmuramic acid 6-phosphate etherase (305 aa).

An SIS domain is found at 54-217 (AVPQLERGGR…SSALMVRLGK (164 aa)). The active-site Proton donor is the E82. E113 is a catalytic residue.

The protein belongs to the GCKR-like family. MurNAc-6-P etherase subfamily. Homodimer.

It carries out the reaction N-acetyl-D-muramate 6-phosphate + H2O = N-acetyl-D-glucosamine 6-phosphate + (R)-lactate. Its pathway is amino-sugar metabolism; N-acetylmuramate degradation. Functionally, specifically catalyzes the cleavage of the D-lactyl ether substituent of MurNAc 6-phosphate, producing GlcNAc 6-phosphate and D-lactate. This Deinococcus radiodurans (strain ATCC 13939 / DSM 20539 / JCM 16871 / CCUG 27074 / LMG 4051 / NBRC 15346 / NCIMB 9279 / VKM B-1422 / R1) protein is N-acetylmuramic acid 6-phosphate etherase.